A 101-amino-acid polypeptide reads, in one-letter code: Large ribosomal subunit protein uL23 (101 aa).

The protein belongs to the universal ribosomal protein uL23 family. As to quaternary structure, part of the 50S ribosomal subunit. Contacts protein L29, and trigger factor when it is bound to the ribosome.

In terms of biological role, one of the early assembly proteins it binds 23S rRNA. One of the proteins that surrounds the polypeptide exit tunnel on the outside of the ribosome. Forms the main docking site for trigger factor binding to the ribosome. The chain is Large ribosomal subunit protein uL23 from Corynebacterium glutamicum (strain R).